Reading from the N-terminus, the 412-residue chain is Tryptophan synthase beta chain (412 aa).

Residue Lys-92 is modified to N6-(pyridoxal phosphate)lysine.

It belongs to the TrpB family. In terms of assembly, tetramer of two alpha and two beta chains. Pyridoxal 5'-phosphate is required as a cofactor.

The enzyme catalyses (1S,2R)-1-C-(indol-3-yl)glycerol 3-phosphate + L-serine = D-glyceraldehyde 3-phosphate + L-tryptophan + H2O. It participates in amino-acid biosynthesis; L-tryptophan biosynthesis; L-tryptophan from chorismate: step 5/5. The beta subunit is responsible for the synthesis of L-tryptophan from indole and L-serine. The protein is Tryptophan synthase beta chain of Methylibium petroleiphilum (strain ATCC BAA-1232 / LMG 22953 / PM1).